The sequence spans 174 residues: Small heat shock protein OV25-1 (174 aa).

Residues Leu50–Ser161 form the sHSP domain. Residues Ser153 to Gln174 are disordered. The segment covering Ser161–Gln174 has biased composition (basic and acidic residues).

It belongs to the small heat shock protein (HSP20) family.

This is Small heat shock protein OV25-1 (OV25-1) from Onchocerca volvulus.